A 480-amino-acid polypeptide reads, in one-letter code: Phosphomethylpyrimidine synthase (480 aa).

Substrate is bound by residues N66, M95, Y124, H159, S179 to G181, D220 to R223, and E259. Zn(2+) is bound at residue H263. Y286 is a binding site for substrate. H327 is a binding site for Zn(2+). Residues C407, C410, and C415 each contribute to the [4Fe-4S] cluster site. The interval D426–D480 is disordered. Acidic residues predominate over residues M470 to D480.

This sequence belongs to the ThiC family. [4Fe-4S] cluster is required as a cofactor.

The catalysed reaction is 5-amino-1-(5-phospho-beta-D-ribosyl)imidazole + S-adenosyl-L-methionine = 4-amino-2-methyl-5-(phosphooxymethyl)pyrimidine + CO + 5'-deoxyadenosine + formate + L-methionine + 3 H(+). It participates in cofactor biosynthesis; thiamine diphosphate biosynthesis. In terms of biological role, catalyzes the synthesis of the hydroxymethylpyrimidine phosphate (HMP-P) moiety of thiamine from aminoimidazole ribotide (AIR) in a radical S-adenosyl-L-methionine (SAM)-dependent reaction. The sequence is that of Phosphomethylpyrimidine synthase from Haloarcula marismortui (strain ATCC 43049 / DSM 3752 / JCM 8966 / VKM B-1809) (Halobacterium marismortui).